Reading from the N-terminus, the 151-residue chain is Deoxyuridine 5'-triphosphate nucleotidohydrolase (151 aa).

Substrate contacts are provided by residues 70-72 (RSG), asparagine 83, 87-89 (LID), and methionine 97.

Belongs to the dUTPase family. Requires Mg(2+) as cofactor.

The catalysed reaction is dUTP + H2O = dUMP + diphosphate + H(+). It participates in pyrimidine metabolism; dUMP biosynthesis; dUMP from dCTP (dUTP route): step 2/2. This enzyme is involved in nucleotide metabolism: it produces dUMP, the immediate precursor of thymidine nucleotides and it decreases the intracellular concentration of dUTP so that uracil cannot be incorporated into DNA. This chain is Deoxyuridine 5'-triphosphate nucleotidohydrolase, found in Pseudomonas fluorescens (strain SBW25).